The sequence spans 218 residues: Regulator of G-protein signaling 20 (218 aa).

Over residues 1–10 (MGSERTEMRK) the composition is skewed to basic and acidic residues. The tract at residues 1-26 (MGSERTEMRKRQMAATQETPGTAQAQ) is disordered. A compositionally biased stretch (polar residues) spans 14-26 (AATQETPGTAQAQ). One can recognise an RGS domain in the interval 92–208 (SFDKLMLTPA…MNSAIYKDLL (117 aa)).

Forms a complex with G(alpha)z/i2 subunits and mu-opioid receptors; the formation of this complex results in mu-opioid receptor desensitization. Interacts with OPRM1. Post-translationally, fatty acylated. Heavily palmitoylated in the cysteine string motif. In terms of processing, N- and O-glycosylated in synapsomal membranes. Sumoylated by SUMO1 and SUM02 in synaptosomes. The sumoylated forms act as a scaffold for sequestering mu-opioid receptor-activated G(alpha) subunits.

It is found in the membrane. The protein resides in the nucleus. It localises to the cytoplasm. In terms of biological role, inhibits signal transduction by increasing the GTPase activity of G protein alpha subunits thereby driving them into their inactive GDP-bound form. Binds selectively to G(z)-alpha and G(alpha)-i2 subunits, accelerates their GTPase activity and regulates their signaling activities. The G(z)-alpha activity is inhibited by the phosphorylation and palmitoylation of the G-protein. Negatively regulates mu-opioid receptor-mediated activation of the G-proteins. This Gallus gallus (Chicken) protein is Regulator of G-protein signaling 20 (RGS20).